Consider the following 512-residue polypeptide: Glycerol kinase (512 aa).

Threonine 13 is a binding site for ADP. Positions 13, 14, and 15 each coordinate ATP. Residue threonine 13 coordinates sn-glycerol 3-phosphate. Arginine 17 contacts ADP. The sn-glycerol 3-phosphate site is built by arginine 83, glutamate 84, tyrosine 135, and aspartate 252. Residues arginine 83, glutamate 84, tyrosine 135, aspartate 252, and glutamine 253 each coordinate glycerol. ADP-binding residues include threonine 274 and glycine 318. 4 residues coordinate ATP: threonine 274, glycine 318, glutamine 322, and glycine 419. The ADP site is built by glycine 419 and asparagine 423.

The protein belongs to the FGGY kinase family.

It catalyses the reaction glycerol + ATP = sn-glycerol 3-phosphate + ADP + H(+). The protein operates within polyol metabolism; glycerol degradation via glycerol kinase pathway; sn-glycerol 3-phosphate from glycerol: step 1/1. Its activity is regulated as follows. Inhibited by fructose 1,6-bisphosphate (FBP). Key enzyme in the regulation of glycerol uptake and metabolism. Catalyzes the phosphorylation of glycerol to yield sn-glycerol 3-phosphate. The chain is Glycerol kinase from Corynebacterium kroppenstedtii (strain DSM 44385 / JCM 11950 / CIP 105744 / CCUG 35717).